Reading from the N-terminus, the 323-residue chain is Fructose-1,6-bisphosphatase class 1 (323 aa).

Residues glutamate 88, aspartate 107, leucine 109, and aspartate 110 each contribute to the Mg(2+) site. Residues 110–113 (DGSS) and asparagine 200 contribute to the substrate site. Glutamate 272 provides a ligand contact to Mg(2+).

The protein belongs to the FBPase class 1 family. In terms of assembly, homotetramer. Mg(2+) is required as a cofactor.

Its subcellular location is the cytoplasm. It carries out the reaction beta-D-fructose 1,6-bisphosphate + H2O = beta-D-fructose 6-phosphate + phosphate. The protein operates within carbohydrate biosynthesis; gluconeogenesis. The polypeptide is Fructose-1,6-bisphosphatase class 1 (Acinetobacter baylyi (strain ATCC 33305 / BD413 / ADP1)).